Consider the following 255-residue polypeptide: 5-oxoprolinase subunit A (255 aa).

The protein belongs to the LamB/PxpA family. In terms of assembly, forms a complex composed of PxpA, PxpB and PxpC.

The enzyme catalyses 5-oxo-L-proline + ATP + 2 H2O = L-glutamate + ADP + phosphate + H(+). In terms of biological role, catalyzes the cleavage of 5-oxoproline to form L-glutamate coupled to the hydrolysis of ATP to ADP and inorganic phosphate. The protein is 5-oxoprolinase subunit A of Nitrobacter hamburgensis (strain DSM 10229 / NCIMB 13809 / X14).